The primary structure comprises 1061 residues: Transcription factor GTE10 (1061 aa).

Disordered regions lie at residues 32–56 (ERMN…NNGV) and 106–152 (NDHS…RLNV). Positions 109-118 (SCSDGPRRPP) are enriched in basic and acidic residues. The Bromo domain occupies 156 to 262 (YTVASVMKEC…KYFESGWKSI (107 aa)). One can recognise an NET domain in the interval 304-386 (KLRVEPAKLV…DYLREKKKSM (83 aa)). 4 disordered regions span residues 443-518 (ACRN…LNEL), 538-558 (VPDE…PDKR), 606-645 (KERL…ARQA), and 710-1033 (HLGL…GNGK). Over residues 448-476 (ESSSSSSSSSESGSSSSDSDSCSSSGSET) the composition is skewed to low complexity. Positions 477 to 506 (DSIKASKPTSREEKKQPGVGIDKKEDDSNS) are enriched in basic and acidic residues. Positions 588 to 658 (PEKLRIEREE…MEKTVEINEG (71 aa)) form a coiled coil. Basic and acidic residues-rich tracts occupy residues 733–755 (RKVE…RVEG), 770–792 (EAHD…ERQL), 828–852 (EEVH…EDPR), 860–883 (VSEK…REEQ), and 912–929 (LSLD…REEG). A coiled-coil region spans residues 852 to 893 (RASGNEESVSEKAQDYENQRDEKINQSEREEQLENVLEQESS). Residues 940–949 (LVSQKTQDNG) show a composition bias toward polar residues. Composition is skewed to basic and acidic residues over residues 952–962 (EDEKSINKIEG) and 990–1002 (GEQK…KGVE).

Interacts with TIP/NAC091. As to expression, widely expressed in all tissues.

It is found in the nucleus. In terms of biological role, acts as a negative regulator in plant response to changes in environmental conditions through the control of ABA-regulated gene expression. The polypeptide is Transcription factor GTE10 (GTE10) (Arabidopsis thaliana (Mouse-ear cress)).